A 562-amino-acid polypeptide reads, in one-letter code: Alpha-amylase 2 (562 aa).

N236 contacts Ca(2+). The active-site Nucleophile is the D309. E338 (proton donor) is an active-site residue.

The protein belongs to the glycosyl hydrolase 13 family. In terms of assembly, monomer. It depends on Ca(2+) as a cofactor.

The protein resides in the cytoplasm. It carries out the reaction Endohydrolysis of (1-&gt;4)-alpha-D-glucosidic linkages in polysaccharides containing three or more (1-&gt;4)-alpha-linked D-glucose units.. The polypeptide is Alpha-amylase 2 (amyB) (Dictyoglomus thermophilum (strain ATCC 35947 / DSM 3960 / H-6-12)).